A 744-amino-acid polypeptide reads, in one-letter code: NADH-ubiquinone oxidoreductase 78 kDa subunit, mitochondrial (744 aa).

The span at 1–10 (MLRSTLSRSA) shows a compositional bias: polar residues. The segment at 1 to 26 (MLRSTLSRSAWRTGRHQAARNASRAF) is disordered. A mitochondrion-targeting transit peptide spans 1 to 33 (MLRSTLSRSAWRTGRHQAARNASRAFSATAQRP). A 2Fe-2S ferredoxin-type domain is found at 34–112 (AEVELTIDGK…GMVVKTNSPL (79 aa)). [2Fe-2S] cluster is bound by residues Cys68, Cys79, Cys82, and Cys96. The 40-residue stretch at 112–151 (LTHKAREGVMEFLLANHPLDCPICDQGGECDLQDQSMRYG) folds into the 4Fe-4S His(Cys)3-ligated-type domain. Residues His128, Cys132, Cys135, Cys141, Cys182, Cys185, Cys188, and Cys232 each coordinate [4Fe-4S] cluster. Positions 251–307 (LKKTESIDVLDGLGSNIRVDTRGLEVMRILPRLNDEVNEEWINDKTRFACDGLKTQR) constitute a 4Fe-4S Mo/W bis-MGD-type domain.

It belongs to the complex I 75 kDa subunit family. In terms of assembly, complex I is composed of about 40 different subunits. Requires [2Fe-2S] cluster as cofactor. The cofactor is [4Fe-4S] cluster.

The protein resides in the mitochondrion inner membrane. It catalyses the reaction a ubiquinone + NADH + 5 H(+)(in) = a ubiquinol + NAD(+) + 4 H(+)(out). In terms of biological role, core subunit of the mitochondrial membrane respiratory chain NADH dehydrogenase (Complex I) that is believed to belong to the minimal assembly required for catalysis. Complex I functions in the transfer of electrons from NADH to the respiratory chain. The immediate electron acceptor for the enzyme is believed to be ubiquinone. This is the largest subunit of complex I and it is a component of the iron-sulfur (IP) fragment of the enzyme. It may form part of the active site crevice where NADH is oxidized. This chain is NADH-ubiquinone oxidoreductase 78 kDa subunit, mitochondrial (nuo78), found in Neurospora crassa (strain ATCC 24698 / 74-OR23-1A / CBS 708.71 / DSM 1257 / FGSC 987).